A 124-amino-acid polypeptide reads, in one-letter code: Iron-sulfur cluster insertion protein ErpA (124 aa).

The iron-sulfur cluster site is built by cysteine 52, cysteine 116, and cysteine 118.

It belongs to the HesB/IscA family. As to quaternary structure, homodimer. Requires iron-sulfur cluster as cofactor.

Its function is as follows. Required for insertion of 4Fe-4S clusters for at least IspG. This chain is Iron-sulfur cluster insertion protein ErpA, found in Vibrio atlanticus (strain LGP32) (Vibrio splendidus (strain Mel32)).